A 202-amino-acid chain; its full sequence is Putative NAD(P)H nitroreductase YodC (202 aa).

FMN contacts are provided by residues 11 to 13 (RAS), 68 to 70 (QKQ), 155 to 156 (GG), and Arg-192.

The protein belongs to the nitroreductase family. FMN is required as a cofactor.

It localises to the cytoplasm. In terms of biological role, putative nitroreductase that may contribute to the degradation of aromatic compounds. The chain is Putative NAD(P)H nitroreductase YodC (yodC) from Bacillus subtilis (strain 168).